Consider the following 312-residue polypeptide: UDP-N-acetylenolpyruvoylglucosamine reductase (312 aa).

The FAD-binding PCMH-type domain occupies 30-202 (RVGGPAQWLA…VAAQFQLEPG (173 aa)). R181 is an active-site residue. S232 serves as the catalytic Proton donor. The active site involves E302.

Belongs to the MurB family. Requires FAD as cofactor.

It localises to the cytoplasm. The catalysed reaction is UDP-N-acetyl-alpha-D-muramate + NADP(+) = UDP-N-acetyl-3-O-(1-carboxyvinyl)-alpha-D-glucosamine + NADPH + H(+). It functions in the pathway cell wall biogenesis; peptidoglycan biosynthesis. In terms of biological role, cell wall formation. In Synechococcus sp. (strain CC9311), this protein is UDP-N-acetylenolpyruvoylglucosamine reductase.